The sequence spans 572 residues: Methionine--tRNA ligase (572 aa).

Residues Pro11–Asn21 carry the 'HIGH' region motif. Zn(2+) contacts are provided by Cys143, Cys146, Cys156, and Cys159. The 'KMSKS' region motif lies at Gln346–Ser350. An ATP-binding site is contributed by Thr349.

Belongs to the class-I aminoacyl-tRNA synthetase family. MetG type 1 subfamily. Monomer. It depends on Zn(2+) as a cofactor.

It is found in the cytoplasm. The enzyme catalyses tRNA(Met) + L-methionine + ATP = L-methionyl-tRNA(Met) + AMP + diphosphate. Functionally, is required not only for elongation of protein synthesis but also for the initiation of all mRNA translation through initiator tRNA(fMet) aminoacylation. This is Methionine--tRNA ligase from Roseobacter denitrificans (strain ATCC 33942 / OCh 114) (Erythrobacter sp. (strain OCh 114)).